The sequence spans 116 residues: S-adenosylmethionine decarboxylase proenzyme (116 aa).

Catalysis depends on Ser63, which acts as the Schiff-base intermediate with substrate; via pyruvic acid. Ser63 is subject to Pyruvic acid (Ser); by autocatalysis. His68 serves as the catalytic Proton acceptor; for processing activity. Cys83 functions as the Proton donor; for catalytic activity in the catalytic mechanism.

This sequence belongs to the prokaryotic AdoMetDC family. Type 1 subfamily. In terms of assembly, heterotetramer of two alpha and two beta chains arranged as a dimer of alpha/beta heterodimers. Requires pyruvate as cofactor. Post-translationally, is synthesized initially as an inactive proenzyme. Formation of the active enzyme involves a self-maturation process in which the active site pyruvoyl group is generated from an internal serine residue via an autocatalytic post-translational modification. Two non-identical subunits are generated from the proenzyme in this reaction, and the pyruvate is formed at the N-terminus of the alpha chain, which is derived from the carboxyl end of the proenzyme. The post-translation cleavage follows an unusual pathway, termed non-hydrolytic serinolysis, in which the side chain hydroxyl group of the serine supplies its oxygen atom to form the C-terminus of the beta chain, while the remainder of the serine residue undergoes an oxidative deamination to produce ammonia and the pyruvoyl group blocking the N-terminus of the alpha chain.

It catalyses the reaction S-adenosyl-L-methionine + H(+) = S-adenosyl 3-(methylsulfanyl)propylamine + CO2. The protein operates within amine and polyamine biosynthesis; S-adenosylmethioninamine biosynthesis; S-adenosylmethioninamine from S-adenosyl-L-methionine: step 1/1. Catalyzes the decarboxylation of S-adenosylmethionine to S-adenosylmethioninamine (dcAdoMet), the propylamine donor required for the synthesis of the polyamines spermine and spermidine from the diamine putrescine. In Clostridium botulinum (strain ATCC 19397 / Type A), this protein is S-adenosylmethionine decarboxylase proenzyme.